The sequence spans 237 residues: Ribosomal RNA small subunit methyltransferase G (237 aa).

S-adenosyl-L-methionine-binding positions include Gly78, Phe83, 129-130 (AE), and Arg148.

This sequence belongs to the methyltransferase superfamily. RNA methyltransferase RsmG family.

The protein localises to the cytoplasm. In terms of biological role, specifically methylates the N7 position of a guanine in 16S rRNA. The protein is Ribosomal RNA small subunit methyltransferase G of Streptococcus pyogenes serotype M12 (strain MGAS2096).